We begin with the raw amino-acid sequence, 311 residues long: Ribosomal RNA small subunit methyltransferase H (311 aa).

S-adenosyl-L-methionine is bound by residues 32–34 (AGH), D52, F79, D100, and Q107.

It belongs to the methyltransferase superfamily. RsmH family.

It localises to the cytoplasm. It carries out the reaction cytidine(1402) in 16S rRNA + S-adenosyl-L-methionine = N(4)-methylcytidine(1402) in 16S rRNA + S-adenosyl-L-homocysteine + H(+). In terms of biological role, specifically methylates the N4 position of cytidine in position 1402 (C1402) of 16S rRNA. This Staphylococcus aureus (strain bovine RF122 / ET3-1) protein is Ribosomal RNA small subunit methyltransferase H.